The sequence spans 816 residues: Two pore channel protein 1 (816 aa).

The Cytoplasmic portion of the chain corresponds to 1–112; it reads MAVSLDDDVP…AHNHLFYLME (112 aa). The disordered stretch occupies residues 17–64; sequence EGGSAPLAPSNGLGQEELPSKNGGSYAIHDSQAPSLSSGGESSPSSPA. The segment covering 50-63 has biased composition (low complexity); the sequence is PSLSSGGESSPSSP. A helical transmembrane segment spans residues 113-133; it reads LATALLLLLLSLCEAPAVPAL. A topological domain (extracellular) is located at residue Arg-134. Residues 135–155 traverse the membrane as a helical segment; sequence LGIYVHATLELFALMVVVFEL. Residues 156-177 are Cytoplasmic-facing; sequence CMKLRWLGLHTFIRHKRTMVKT. Residues 178-198 traverse the membrane as a helical segment; that stretch reads SVLVVQFVEAIVVLVRQMSHV. Over 199–200 the chain is Extracellular; sequence RV. The helical transmembrane segment at 201 to 220 threads the bilayer; that stretch reads TRALRCIFLVDCRYCGGVRR. Over 221 to 234 the chain is Cytoplasmic; the sequence is NLRQIFQSLPPFMD. The chain crosses the membrane as a helical span at residues 235–255; the sequence is ILLLLLFFMIIFAILGFYLFS. Residues 256–262 lie on the Extracellular side of the membrane; the sequence is PNPSDPY. Residues 263-286 constitute an intramembrane region (helical; Pore-forming); sequence FSTLENSIVSLFVLLTTANFPDVM. At 287–294 the chain is on the extracellular side; sequence MPSYSRNP. A helical membrane pass occupies residues 295-315; the sequence is WSCVFFIVYLSIELYFIMNLL. The Cytoplasmic portion of the chain corresponds to 316 to 444; sequence LAVVFDTFND…NILVKSKAFQ (129 aa). The helical transmembrane segment at 445–465 threads the bilayer; it reads YFMYLVVAVNGVWILVETFML. The Extracellular portion of the chain corresponds to 466-479; sequence KGGNFFSKHVPWSY. A helical membrane pass occupies residues 480 to 500; that stretch reads LVFLTIYGVELFLKVAGLGPV. Over 501–503 the chain is Cytoplasmic; sequence EYL. A helical transmembrane segment spans residues 504–526; it reads SSGWNLFDFSVTVFAFLGLLALA. The Extracellular segment spans residues 527 to 534; sequence LNMEPFYF. Residues 535 to 549 form a helical membrane-spanning segment; the sequence is IVVLRPLQLLRLFKL. Residues 550–573 lie on the Cytoplasmic side of the membrane; the sequence is KERYRNVLDTMFELLPRMASLGLT. The chain crosses the membrane as a helical span at residues 574-594; sequence LLIFYYSFAIVGMEFFCGIVF. Over 595–629 the chain is Extracellular; it reads PNCCNTSTVADAYRWRNHTVGNRTVVEEGYYYLNN. 3 N-linked (GlcNAc...) asparagine glycosylation sites follow: Asn-599, Asn-611, and Asn-616. The helical; Pore-forming intramembrane region spans 630 to 653; the sequence is FDNILNSFVTLFELTVVNNWYIIM. Residues 654-670 are Extracellular-facing; it reads EGVTSQTSHWSRLYFMT. The helical transmembrane segment at 671-691 threads the bilayer; it reads FYIVTMVVMTIIVAFILEAFV. Over 692-816 the chain is Cytoplasmic; the sequence is FRMNYSRKNQ…GSRQRSQTVT (125 aa). The stretch at 769 to 796 forms a coiled coil; sequence SLKMYQEEIQEWYEEHAREQEQQRQLSS. The disordered stretch occupies residues 782–816; that stretch reads EEHAREQEQQRQLSSSAAPAAQQPPGSRQRSQTVT. Residues 791–816 show a composition bias toward low complexity; it reads QRQLSSSAAPAAQQPPGSRQRSQTVT.

The protein belongs to the calcium channel alpha-1 subunit (TC 1.A.1.11) family. Two pore calcium channel subfamily. Dimer. Interacts with MTOR; the interaction is required for TPCN1 ATP sensitivity. Interacts with STX7, STX8 and STX12. Interacts with JPT2. Found in a complex with LSM12, TPCN1 and TPCN2. Post-translationally, N-glycosylated. In terms of tissue distribution, highest expression found in the heart and kidney, and lowest expression found in the spleen.

It is found in the lysosome membrane. The protein resides in the endosome membrane. Its subcellular location is the early endosome membrane. The protein localises to the recycling endosome membrane. The enzyme catalyses Na(+)(in) = Na(+)(out). The catalysed reaction is Ca(2+)(in) = Ca(2+)(out). Na(+) current is inhibited by ATP in a MTORC-dependent manner. ATP sensitivity is independent of PI(3,5)P2. Probably regulated by Mg(2+) ions, cytosolic Mg(2+) selectively inhibits outward current while lysosomal Mg(2+) modestly inhibits both the outward and inward currents. In the absence of Mg(2+), NAADP readily activates TPCN2, with properties similar to PI(3,5)P2. Both current elicited by PI(3,5)P2 as well as NAADP are inhibited by tetrandrine. Intracellular channel initially characterized as a non-selective Ca(2+)-permeable channel activated by NAADP (nicotinic acid adenine dinucleotide phosphate), it is also a voltage-gated highly-selective Na(+) channel activated directly by PI(3,5)P2 (phosphatidylinositol 3,5-bisphosphate) that senses pH changes and confers electrical excitability to organelles. Localizes to the early and recycling endosomes membranes where it plays a role in the uptake and processing of proteins and regulates organellar membrane excitability, membrane trafficking and pH homeostasis. Ion selectivity is not fixed but rather agonist-dependent and under defined ionic conditions, can be readily activated by both NAADP and PI(3,5)P2. Required for mTOR-dependent nutrient sensing. Its function is as follows. (Microbial infection) During Ebola virus (EBOV) infection, controls the movement of endosomes containing virus particles and is required by EBOV to escape from the endosomal network into the cell cytoplasm. The sequence is that of Two pore channel protein 1 from Homo sapiens (Human).